The sequence spans 333 residues: EP300-interacting inhibitor of differentiation 3 (333 aa).

This sequence belongs to the NSE4 family. Component of the SMC5-SMC6 complex which consists at least of SMC5, SMC6, NSMCE2, NSMCE1, NSMCE4A or EID3 and NSMCE3; EID3 seems to be a testis-specific subunit. NSMCE1, NSMCE4A or EID3 and NSMCE3 probably form a subcomplex that bridges the head domains of the SMC5:SMC6 heterodimer. Homodimer, and heterodimer with EID2. Interacts with the C-terminal region of CREBBP. Highly expressed in testis.

It localises to the nucleus. The protein localises to the cytoplasm. Its subcellular location is the chromosome. It is found in the telomere. Tissue-specific component of the SMC5-SMC6 complex, a complex involved in repair of DNA double-strand breaks by homologous recombination. The complex may promote sister chromatid homologous recombination by recruiting the SMC1-SMC3 cohesin complex to double-strand breaks. The complex is required for telomere maintenance via recombination and mediates sumoylation of shelterin complex (telosome) components. In terms of biological role, acts as a repressor of nuclear receptor-dependent transcription possibly by interfering with CREBBP-dependent coactivation. May function as a coinhibitor of other CREBBP/EP300-dependent transcription factors. The polypeptide is EP300-interacting inhibitor of differentiation 3 (Homo sapiens (Human)).